The sequence spans 359 residues: Pyruvate dehydrogenase E1 component subunit beta, mitochondrial (359 aa).

A mitochondrion-targeting transit peptide spans 1–30 (MAAVSGLVRRPLREVSGLLKRRFHWTAPAA). Tyrosine 67 is subject to Phosphotyrosine. A thiamine diphosphate-binding site is contributed by glutamate 89. K(+)-binding residues include isoleucine 142, alanine 190, isoleucine 191, aspartate 193, and asparagine 195. Lysine 354 carries the N6-acetyllysine modification.

In terms of assembly, heterotetramer of two PDHA1 and two PDHB subunits. The heterotetramer interacts with DLAT, and is part of the multimeric pyruvate dehydrogenase complex that contains multiple copies of pyruvate dehydrogenase (E1), dihydrolipoamide acetyltransferase (DLAT, E2) and lipoamide dehydrogenase (DLD, E3). These subunits are bound to an inner core composed of about 48 DLAT and 12 PDHX molecules. Interacts with DLAT. Thiamine diphosphate is required as a cofactor.

The protein resides in the mitochondrion matrix. The enzyme catalyses N(6)-[(R)-lipoyl]-L-lysyl-[protein] + pyruvate + H(+) = N(6)-[(R)-S(8)-acetyldihydrolipoyl]-L-lysyl-[protein] + CO2. The pyruvate dehydrogenase complex catalyzes the overall conversion of pyruvate to acetyl-CoA and CO(2), and thereby links the glycolytic pathway to the tricarboxylic cycle. The chain is Pyruvate dehydrogenase E1 component subunit beta, mitochondrial (PDHB) from Homo sapiens (Human).